A 240-amino-acid polypeptide reads, in one-letter code: Pyridoxine 5'-phosphate synthase (240 aa).

3-amino-2-oxopropyl phosphate is bound at residue asparagine 6. Residue 8-9 coordinates 1-deoxy-D-xylulose 5-phosphate; it reads DH. Residue arginine 17 participates in 3-amino-2-oxopropyl phosphate binding. Histidine 42 acts as the Proton acceptor in catalysis. 2 residues coordinate 1-deoxy-D-xylulose 5-phosphate: arginine 44 and histidine 49. The active-site Proton acceptor is glutamate 69. Threonine 99 is a 1-deoxy-D-xylulose 5-phosphate binding site. The Proton donor role is filled by histidine 190. 3-amino-2-oxopropyl phosphate is bound by residues glycine 191 and 212–213; that span reads GH.

This sequence belongs to the PNP synthase family. In terms of assembly, homooctamer; tetramer of dimers.

It is found in the cytoplasm. The enzyme catalyses 3-amino-2-oxopropyl phosphate + 1-deoxy-D-xylulose 5-phosphate = pyridoxine 5'-phosphate + phosphate + 2 H2O + H(+). The protein operates within cofactor biosynthesis; pyridoxine 5'-phosphate biosynthesis; pyridoxine 5'-phosphate from D-erythrose 4-phosphate: step 5/5. Catalyzes the complicated ring closure reaction between the two acyclic compounds 1-deoxy-D-xylulose-5-phosphate (DXP) and 3-amino-2-oxopropyl phosphate (1-amino-acetone-3-phosphate or AAP) to form pyridoxine 5'-phosphate (PNP) and inorganic phosphate. The chain is Pyridoxine 5'-phosphate synthase from Pseudomonas putida (strain ATCC 700007 / DSM 6899 / JCM 31910 / BCRC 17059 / LMG 24140 / F1).